The following is a 357-amino-acid chain: uncharacterized protein (357 aa).

3 consecutive transmembrane segments (helical) span residues 21 to 41 (FIKIIEFWFYLIQILTVLFSW), 86 to 106 (FFCLFTDTLYFMMLIITCTLF), and 135 to 155 (GGFVEFGSFTVLLLLKWPVIF). 2 disordered regions span residues 184–229 (DKNK…AMSD) and 283–357 (KAGS…NKRN). Positions 195–223 (TTNTTNFSGNGSSSSTTNATSSSSSQANN) are enriched in low complexity. Basic and acidic residues-rich tracts occupy residues 305–314 (KIEEYDNQKQ) and 322–337 (KETNKQQTQKDDEKET). Residues 305-337 (KIEEYDNQKQEEEENEEKETNKQQTQKDDEKET) adopt a coiled-coil conformation. The span at 346-357 (KKSKKGKKNKRN) shows a compositional bias: basic residues.

The protein resides in the membrane. This is an uncharacterized protein from Dictyostelium discoideum (Social amoeba).